A 123-amino-acid polypeptide reads, in one-letter code: Ribosome-binding factor A (123 aa).

It belongs to the RbfA family. As to quaternary structure, monomer. Binds 30S ribosomal subunits, but not 50S ribosomal subunits or 70S ribosomes.

The protein resides in the cytoplasm. In terms of biological role, one of several proteins that assist in the late maturation steps of the functional core of the 30S ribosomal subunit. Associates with free 30S ribosomal subunits (but not with 30S subunits that are part of 70S ribosomes or polysomes). Required for efficient processing of 16S rRNA. May interact with the 5'-terminal helix region of 16S rRNA. This Legionella pneumophila (strain Paris) protein is Ribosome-binding factor A.